The following is a 539-amino-acid chain: MHDKILILDFGSQVTQLIARRVREAHVYCEIHPNDVSDDFVREFAPKGVILSGSHASTYEDHQLRAPQAVWDLGVPVLGICYGMQTMAVQLGGKVEWSDHREFGYAEVRAHGRTRLLDGIQDFATPEGHGMLKVWMSHGDKVGEMPPGFALMASTPSCPIAGMADEARGYYAVQFHPEVTHTVQGRKLLERFVLDIAGAKPDWIMRDHIEEAVARIREQVGDEEVILGLSGGVDSSVAAALIHRAIGDQLTCVFVDHGLLRLNEGKMVLDMFEGRLHAKVVHVDASEQFLGHLAGVADPEHKRKIIGREFVEVFQAEAKKLTNAKWLAQGTIYPDVIESGGAKTKKATTIKSHHNVGGLPETLGLKLLEPLRDLFKDEVRELGVALGLPAEMVYRHPFPGPGLGVRILGEVKRDYAELLRRADAIFIEELRGTLATEQDAAAGLCEPSQVGKSWYDLTSQAFAVFLPVKSVGVMGDGRTYDYVAALRAVQTTDFMTAHWAHLPYALLGRASNRIINEVRGINRVVYDVSGKPPATIEWE.

One can recognise a Glutamine amidotransferase type-1 domain in the interval 4–202 (KILILDFGSQ…VLDIAGAKPD (199 aa)). The active-site Nucleophile is the C81. Active-site residues include H176 and E178. Residues 203-395 (WIMRDHIEEA…LGLPAEMVYR (193 aa)) form the GMPS ATP-PPase domain. An ATP-binding site is contributed by 230-236 (SGGVDSS).

As to quaternary structure, homodimer.

The catalysed reaction is XMP + L-glutamine + ATP + H2O = GMP + L-glutamate + AMP + diphosphate + 2 H(+). The protein operates within purine metabolism; GMP biosynthesis; GMP from XMP (L-Gln route): step 1/1. Functionally, catalyzes the synthesis of GMP from XMP. The protein is GMP synthase [glutamine-hydrolyzing] of Burkholderia pseudomallei (strain 1106a).